A 107-amino-acid chain; its full sequence is Proteinase inhibitor 1 (107 aa).

A signal peptide spans Met-1–Ala-23. A propeptide spanning residues Arg-24 to Leu-36 is cleaved from the precursor.

Belongs to the protease inhibitor I13 (potato type I serine protease inhibitor) family.

The sequence is that of Proteinase inhibitor 1 from Solanum tuberosum (Potato).